Consider the following 156-residue polypeptide: Toxin Res (156 aa).

Belongs to the MbcT/ParT/Res family. In terms of assembly, homodimer. Forms a complex with cognate antitoxin Xre.

Its function is as follows. Toxic component of a type II toxin-antitoxin (TA) system. Expression in E.coli inhibits cell growth; bacteriostasis is neutralized by expression of cognate antitoxin Xre. Expression in E.coli leads to almost complete depletion of intracellular NAD(+): NAD(+) levels are partially restored when coexpressed with antitoxin Xre. The chain is Toxin Res from Photorhabdus laumondii subsp. laumondii (strain DSM 15139 / CIP 105565 / TT01) (Photorhabdus luminescens subsp. laumondii).